Here is a 311-residue protein sequence, read N- to C-terminus: Cytosolic Fe-S cluster assembly factor Nubp1 homolog (311 aa).

[4Fe-4S] cluster contacts are provided by C9, C23, C26, and C32. 63–70 (GKGGVGKS) contributes to the ATP binding site. 2 residues coordinate [4Fe-4S] cluster: C240 and C243.

It belongs to the Mrp/NBP35 ATP-binding proteins family. NUBP1/NBP35 subfamily. In terms of assembly, heterotetramer of 2 Nubp1 and 2 Nubp2 chains. [4Fe-4S] cluster is required as a cofactor.

Its subcellular location is the cytoplasm. Its function is as follows. Component of the cytosolic iron-sulfur (Fe/S) protein assembly (CIA) machinery. Required for maturation of extramitochondrial Fe-S proteins. The Nubp1-Nubp2 heterotetramer forms a Fe-S scaffold complex, mediating the de novo assembly of an Fe-S cluster and its transfer to target apoproteins. The protein is Cytosolic Fe-S cluster assembly factor Nubp1 homolog of Drosophila yakuba (Fruit fly).